The sequence spans 198 residues: Ribonuclease HII (198 aa).

Residues 14-198 (GVIAGVDEVG…KNFAPISRAL (185 aa)) form the RNase H type-2 domain. 3 residues coordinate a divalent metal cation: D20, E21, and D112.

The protein belongs to the RNase HII family. Mn(2+) is required as a cofactor. Mg(2+) serves as cofactor.

Its subcellular location is the cytoplasm. The catalysed reaction is Endonucleolytic cleavage to 5'-phosphomonoester.. Functionally, endonuclease that specifically degrades the RNA of RNA-DNA hybrids. The protein is Ribonuclease HII of Wolbachia pipientis wMel.